A 365-amino-acid chain; its full sequence is GDSL lipase (365 aa).

The signal sequence occupies residues 1-27 (MAVASRKLGALVLVAVLCLSLPTGCLS). Residue serine 40 is the Nucleophile of the active site. Residues asparagine 189 and asparagine 310 are each glycosylated (N-linked (GlcNAc...) asparagine). Catalysis depends on charge relay system residues aspartate 318 and histidine 321.

Belongs to the 'GDSL' lipolytic enzyme family. Restricted to the pericarp during achene maturation. Expressed in the leaves of mature plants and seedlings, as well as in buds and flowers. Present in disk florets.

The protein resides in the secreted. It localises to the extracellular space. The catalysed reaction is (Z,S)-pyrethrolone + (1R,3R)-chrysanthemoyl-CoA = pyrethrin I + CoA. The enzyme catalyses (Z,S)-pyrethrolone + (1R,3R)-pyrethroyl-CoA = pyrethrin II + CoA. It catalyses the reaction (Z,S)-jasmololone + (1R,3R)-chrysanthemoyl-CoA = jasmolin I + CoA. It carries out the reaction (Z,S)-cinerolone + (1R,3R)-chrysanthemoyl-CoA = cinerin I + CoA. The catalysed reaction is (Z,S)-jasmololone + (1R,3R)-pyrethroyl-CoA = jasmolin II + CoA. The enzyme catalyses (Z,S)-cinerolone + (1R,3R)-pyrethroyl-CoA = cinerin II + CoA. Its pathway is isoprenoid biosynthesis. In terms of biological role, component of the monoterpenoid pyrethrins biosynthesis; pyrethrins are widely used plant-derived pesticide. Acyltransferase that catalyzes the esterification of terpene acids and lipid alcohol substrates into pyrethrins; mediates the transfer of a chrysanthemoyl moiety from the coenzyme A (CoA) thio-ester chrysanthemoyl CoA to pyrethrolone, and, to a lower extent, to jasmololone and cinerolone thus producing pyrethrins (e.g. pyrethrin type I). Can also use pyrethroyl CoA as substrate. Also has esterase activity, being able to cleave the ester bond of pyrethrin I, p-nitrophenyl butanoate and p-nitrophenyl octanoate to produce pyrethrolone and p-nitrophenol, respectively. This chain is GDSL lipase, found in Tanacetum cinerariifolium (Dalmatian daisy).